Reading from the N-terminus, the 396-residue chain is MIRTLDDLEADGTALGVRIDINSPLSSDGLADDARLRAHVDTVEELCRRDARVALLAHQGRPGGDEFSDLERHAERLDELLDAPVEYCDSTFSAEARTRIDELDPGRAVLLENTRFYSEEYMSFEPSAAAETYLVSRLAPALDAYVNDAFATAHRSQPSVVGFPERLPAYAGRVMERELDVLGNIESSPEPRVYVLGGAKVDDSIAVARSVLERGLADSVLTAGIVGNAFLLADGVSLGAASAAVVNERSHEAVKQAGDLLDDFSHRIYMPRDVAVENDAGERVEHDLEDLPASTPAMDIGARTVAAYANILDDAGTAILNGPAGVFEDDRFETGTLELYKSATRAEQSIVGGGDTASALRKLGILEDFDHVSTGGGAALNMLTGETLVGVEALRE.

Residues 20–22 (DIN), Arg35, 58–61 (HQGR), Arg115, and Arg155 each bind substrate. ATP contacts are provided by residues Glu328 and 353–356 (GGDT).

The protein belongs to the phosphoglycerate kinase family. Monomer.

Its subcellular location is the cytoplasm. It catalyses the reaction (2R)-3-phosphoglycerate + ATP = (2R)-3-phospho-glyceroyl phosphate + ADP. It participates in carbohydrate degradation; glycolysis; pyruvate from D-glyceraldehyde 3-phosphate: step 2/5. The chain is Phosphoglycerate kinase from Natronomonas pharaonis (strain ATCC 35678 / DSM 2160 / CIP 103997 / JCM 8858 / NBRC 14720 / NCIMB 2260 / Gabara) (Halobacterium pharaonis).